Consider the following 410-residue polypeptide: Regulator of microtubule dynamics protein 2 (410 aa).

The helical transmembrane segment at 10-27 threads the bilayer; it reads IFGIMVGTAGISLLLLWY. Ser51 is subject to Phosphoserine. Positions 68 to 110 form a coiled coil; sequence FQERQLQILEKLNELLTNMEELKEEIRFLKETVPKLEEYIQDE. Ser121 carries the phosphoserine modification. Residues 122 to 131 show a composition bias toward basic residues; sequence PQHRARKRRL. The tract at residues 122–151 is disordered; sequence PQHRARKRRLPTIQSSATSNSSEEAESEGG. Thr139 carries the phosphothreonine modification. Tyr152 is modified (phosphotyrosine). A phosphothreonine mark is found at Thr154 and Thr157.

The protein belongs to the RMDN family. In terms of assembly, interacts with microtubules.

It localises to the membrane. The protein localises to the cytoplasm. It is found in the cytoskeleton. The protein resides in the spindle. Its subcellular location is the spindle pole. The protein is Regulator of microtubule dynamics protein 2 (RMDN2) of Macaca fascicularis (Crab-eating macaque).